Here is a 347-residue protein sequence, read N- to C-terminus: CDK2-associated and cullin domain-containing protein 1 (347 aa).

The span at 1-11 shows a compositional bias: acidic residues; it reads MEESMEEEEML. 2 disordered regions span residues 1-63 and 320-347; these read MEES…LPGG and RGDQ…RGYR. Over residues 34–49 the composition is skewed to pro residues; sequence QPPPAPPLPPPPPPRP.

Belongs to the cullin family. Interacts with CDK2.

Its function is as follows. Cell cycle associated protein capable of promoting cell proliferation through the activation of CDK2 at the G1/S phase transition. The sequence is that of CDK2-associated and cullin domain-containing protein 1 (Cacul1) from Rattus norvegicus (Rat).